A 358-amino-acid polypeptide reads, in one-letter code: Photosystem II protein D1 (358 aa).

The next 3 helical transmembrane spans lie at 28-45 (YVGW…AAAI), 117-132 (HFLI…QWEL), and 141-155 (WICV…AAFA). H117 is a binding site for chlorophyll a. W125 provides a ligand contact to pheophytin a. [CaMn4O5] cluster contacts are provided by D169 and E188. The chain crosses the membrane as a helical span at residues 196–217 (FHMIGVAGMFGGSLFSAMHGSL). H197 contributes to the chlorophyll a binding site. Residues H214 and 263–264 (SF) contribute to the a quinone site. H214 provides a ligand contact to Fe cation. Residue H271 coordinates Fe cation. Residues 273 to 287 (FLAAWPVICIWITSL) traverse the membrane as a helical segment. Residues H331, E332, D341, and A343 each contribute to the [CaMn4O5] cluster site. The propeptide occupies 344-358 (AAESTPVALIAPAIG).

The protein belongs to the reaction center PufL/M/PsbA/D family. As to quaternary structure, PSII is composed of 1 copy each of membrane proteins PsbA, PsbB, PsbC, PsbD, PsbE, PsbF, PsbH, PsbI, PsbJ, PsbK, PsbL, PsbM, PsbT, PsbX, PsbY, Psb30/Ycf12, peripheral proteins PsbO, CyanoQ (PsbQ), PsbU, PsbV and a large number of cofactors. It forms dimeric complexes. The cofactor is The D1/D2 heterodimer binds P680, chlorophylls that are the primary electron donor of PSII, and subsequent electron acceptors. It shares a non-heme iron and each subunit binds pheophytin, quinone, additional chlorophylls, carotenoids and lipids. D1 provides most of the ligands for the Mn4-Ca-O5 cluster of the oxygen-evolving complex (OEC). There is also a Cl(-1) ion associated with D1 and D2, which is required for oxygen evolution. The PSII complex binds additional chlorophylls, carotenoids and specific lipids.. In terms of processing, tyr-160 forms a radical intermediate that is referred to as redox-active TyrZ, YZ or Y-Z. Post-translationally, C-terminally processed by CtpA; processing is essential to allow assembly of the oxygen-evolving complex and thus photosynthetic growth.

It is found in the cellular thylakoid membrane. It catalyses the reaction 2 a plastoquinone + 4 hnu + 2 H2O = 2 a plastoquinol + O2. Its function is as follows. Photosystem II (PSII) is a light-driven water:plastoquinone oxidoreductase that uses light energy to abstract electrons from H(2)O, generating O(2) and a proton gradient subsequently used for ATP formation. It consists of a core antenna complex that captures photons, and an electron transfer chain that converts photonic excitation into a charge separation. The D1/D2 (PsbA/PsbD) reaction center heterodimer binds P680, the primary electron donor of PSII as well as several subsequent electron acceptors. The polypeptide is Photosystem II protein D1 (Prochlorococcus marinus (strain MIT 9313)).